The primary structure comprises 334 residues: tRNA-dihydrouridine(20/20a) synthase (334 aa).

Residues 17–19 (PMM) and Gln-70 each bind FMN. Cys-100 serves as the catalytic Proton donor. FMN-binding positions include Lys-139, His-171, 211–213 (NGG), and 233–234 (GR).

This sequence belongs to the Dus family. DusA subfamily. FMN serves as cofactor.

The enzyme catalyses 5,6-dihydrouridine(20) in tRNA + NADP(+) = uridine(20) in tRNA + NADPH + H(+). It catalyses the reaction 5,6-dihydrouridine(20) in tRNA + NAD(+) = uridine(20) in tRNA + NADH + H(+). It carries out the reaction 5,6-dihydrouridine(20a) in tRNA + NADP(+) = uridine(20a) in tRNA + NADPH + H(+). The catalysed reaction is 5,6-dihydrouridine(20a) in tRNA + NAD(+) = uridine(20a) in tRNA + NADH + H(+). Functionally, catalyzes the synthesis of 5,6-dihydrouridine (D), a modified base found in the D-loop of most tRNAs, via the reduction of the C5-C6 double bond in target uridines. Specifically modifies U20 and U20a in tRNAs. In Synechocystis sp. (strain ATCC 27184 / PCC 6803 / Kazusa), this protein is tRNA-dihydrouridine(20/20a) synthase (dus2).